A 396-amino-acid chain; its full sequence is Tryptophan synthase beta chain (396 aa).

At K90 the chain carries N6-(pyridoxal phosphate)lysine.

Belongs to the TrpB family. In terms of assembly, tetramer of two alpha and two beta chains. It depends on pyridoxal 5'-phosphate as a cofactor.

It carries out the reaction (1S,2R)-1-C-(indol-3-yl)glycerol 3-phosphate + L-serine = D-glyceraldehyde 3-phosphate + L-tryptophan + H2O. The protein operates within amino-acid biosynthesis; L-tryptophan biosynthesis; L-tryptophan from chorismate: step 5/5. Its function is as follows. The beta subunit is responsible for the synthesis of L-tryptophan from indole and L-serine. The sequence is that of Tryptophan synthase beta chain from Clostridium kluyveri (strain NBRC 12016).